Consider the following 828-residue polypeptide: Protein ELFN1 (828 aa).

A signal peptide spans methionine 1–alanine 25. At glutamine 26–tyrosine 418 the chain is on the extracellular side. LRR repeat units follow at residues threonine 61 to arginine 82, asparagine 85 to glycine 106, asparagine 109 to glycine 130, lysine 133 to glutamate 154, and asparagine 157 to glycine 178. N-linked (GlcNAc...) asparagine glycosylation is found at asparagine 85, asparagine 90, and asparagine 122. Residues asparagine 190–glutamate 253 enclose the LRRCT domain. N-linked (GlcNAc...) asparagine glycosylation occurs at asparagine 210. Residues alanine 258–glutamate 293 are disordered. The segment covering histidine 275–serine 285 has biased composition (pro residues). A Fibronectin type-III domain is found at glutamine 312–leucine 399. N-linked (GlcNAc...) asparagine glycosylation occurs at asparagine 376. The chain crosses the membrane as a helical span at residues isoleucine 419–cysteine 439. The Cytoplasmic portion of the chain corresponds to leucine 440 to serine 828. 2 positions are modified to phosphoserine: serine 460 and serine 646. Disordered stretches follow at residues histidine 627–serine 674 and lysine 697–glycine 731. A compositionally biased stretch (low complexity) spans arginine 638 to threonine 652. Over residues lysine 697–histidine 706 the composition is skewed to basic and acidic residues. Pro residues predominate over residues alanine 714–threonine 725.

Interacts with PPP1CA. Selectively expressed in perialvear somatostatin (Sst)-containing interneurons.

It is found in the membrane. It localises to the cell projection. Its subcellular location is the dendrite. Postsynaptic protein that regulates circuit dynamics in the central nervous system by modulating the temporal dynamics of interneuron recruitment. Specifically present in excitatory synapses onto oriens-lacunosum molecular (OLM) interneurons and acts as a regulator of presynaptic release probability to direct the formation of highly facilitating pyramidal-OLM synapses. Inhibits phosphatase activity of protein phosphatase 1 (PP1) complexes. This is Protein ELFN1 (Elfn1) from Mus musculus (Mouse).